A 421-amino-acid polypeptide reads, in one-letter code: Medium-chain specific acyl-CoA dehydrogenase, mitochondrial (421 aa).

The N-terminal 25 residues, 1–25 (MAAGFGRCCRVLRSISRFHWRSQHT), are a transit peptide targeting the mitochondrion. Lys-69 is modified (N6-acetyllysine; alternate). The residue at position 69 (Lys-69) is an N6-succinyllysine; alternate. 158-167 (YCVTEPGAGS) contacts FAD. Ser-167 lines the octanoyl-CoA pocket. Lys-179 is subject to N6-succinyllysine. 191-193 (WIT) lines the FAD pocket. Residues Lys-212, Lys-217, Lys-259, and Lys-271 each carry the N6-acetyllysine; alternate modification. N6-succinyllysine; alternate occurs at positions 212, 217, 259, and 271. Residue Asp-278 coordinates octanoyl-CoA. Residue Lys-279 is modified to N6-acetyllysine. An octanoyl-CoA-binding site is contributed by Arg-281. At Lys-301 the chain carries N6-acetyllysine. FAD-binding positions include 306–308 (RKT) and 316–317 (HQ). Thr-351 is modified (phosphothreonine). FAD-binding positions include 374-378 (QILGG) and 401-405 (EGTSQ). Glu-401 is a binding site for octanoyl-CoA. Glu-401 (proton acceptor) is an active-site residue.

This sequence belongs to the acyl-CoA dehydrogenase family. In terms of assembly, homotetramer. Interacts with the heterodimeric electron transfer flavoprotein ETF. FAD is required as a cofactor. Post-translationally, acetylated. Could occur at proximity of the cofactor-binding sites and reduce the catalytic activity. Could be deacetylated by SIRT3.

It localises to the mitochondrion matrix. It carries out the reaction a medium-chain 2,3-saturated fatty acyl-CoA + oxidized [electron-transfer flavoprotein] + H(+) = a medium-chain (2E)-enoyl-CoA + reduced [electron-transfer flavoprotein]. The catalysed reaction is pentanoyl-CoA + oxidized [electron-transfer flavoprotein] + H(+) = (2E)-pentenoyl-CoA + reduced [electron-transfer flavoprotein]. The enzyme catalyses hexanoyl-CoA + oxidized [electron-transfer flavoprotein] + H(+) = (2E)-hexenoyl-CoA + reduced [electron-transfer flavoprotein]. It catalyses the reaction octanoyl-CoA + oxidized [electron-transfer flavoprotein] + H(+) = (2E)-octenoyl-CoA + reduced [electron-transfer flavoprotein]. It carries out the reaction decanoyl-CoA + oxidized [electron-transfer flavoprotein] + H(+) = (2E)-decenoyl-CoA + reduced [electron-transfer flavoprotein]. The catalysed reaction is dodecanoyl-CoA + oxidized [electron-transfer flavoprotein] + H(+) = (2E)-dodecenoyl-CoA + reduced [electron-transfer flavoprotein]. The enzyme catalyses tetradecanoyl-CoA + oxidized [electron-transfer flavoprotein] + H(+) = (2E)-tetradecenoyl-CoA + reduced [electron-transfer flavoprotein]. It catalyses the reaction oxidized [electron-transfer flavoprotein] + hexadecanoyl-CoA + H(+) = (2E)-hexadecenoyl-CoA + reduced [electron-transfer flavoprotein]. Its pathway is lipid metabolism; mitochondrial fatty acid beta-oxidation. Medium-chain specific acyl-CoA dehydrogenase is one of the acyl-CoA dehydrogenases that catalyze the first step of mitochondrial fatty acid beta-oxidation, an aerobic process breaking down fatty acids into acetyl-CoA and allowing the production of energy from fats. The first step of fatty acid beta-oxidation consists in the removal of one hydrogen from C-2 and C-3 of the straight-chain fatty acyl-CoA thioester, resulting in the formation of trans-2-enoyl-CoA. Electron transfer flavoprotein (ETF) is the electron acceptor that transfers electrons to the main mitochondrial respiratory chain via ETF-ubiquinone oxidoreductase (ETF dehydrogenase). Among the different mitochondrial acyl-CoA dehydrogenases, medium-chain specific acyl-CoA dehydrogenase acts specifically on acyl-CoAs with saturated 6 to 12 carbons long primary chains. The chain is Medium-chain specific acyl-CoA dehydrogenase, mitochondrial from Homo sapiens (Human).